The following is a 2463-amino-acid chain: Protein TIC 214 (2463 aa).

6 consecutive transmembrane segments (helical) span residues 18–38 (VGLY…LFLL), 60–80 (FFTG…HLAL), 86–106 (ILLL…SGQW), 127–147 (LVFL…GRPM), 170–190 (FVGW…VFVW), and 297–317 (LFSI…PLLY). A coiled-coil region spans residues 326–441 (QLQRKLSNET…AARAMQEAYK (116 aa)). Disordered stretches follow at residues 792–841 (AVPK…RKVN), 1230–1249 (SIQK…GPKK), 1393–1417 (SGGR…EQDF), 2116–2136 (EEEK…KLKK), and 2162–2187 (KQRA…RKVQ). Positions 794–830 (PKKKKKISKSKQKNVKSKQKNVKSKQKNVKSKQKNVK) are enriched in basic residues. Basic and acidic residues-rich tracts occupy residues 832 to 841 (KQNEIKRKVN), 1231 to 1249 (IQKD…GPKK), and 1397 to 1417 (ETPE…EQDF). Residues 2049–2192 (WDALVASLKQ…KRKVQVQENK (144 aa)) are a coiled coil. Residues 2124–2136 (KRKKERKKEKLKK) are compositionally biased toward basic residues.

Belongs to the TIC214 family. In terms of assembly, part of the Tic complex.

The protein resides in the plastid. It localises to the chloroplast inner membrane. Its function is as follows. Involved in protein precursor import into chloroplasts. May be part of an intermediate translocation complex acting as a protein-conducting channel at the inner envelope. This chain is Protein TIC 214, found in Oenothera elata subsp. hookeri (Hooker's evening primrose).